The chain runs to 553 residues: MSTSRLQQQFIRLWQRYNGQSTETTLQALAEVLNCSRRHVRSLLGKMQHAGWLDWQAEAGRGKRSQLIFLRSGLALQQQRAEELLEQDHIDQLVQLVGDKKAVRQMLLSQLGRSFRQGKHILRVLYYRPLENLLPGTALRRSETHMVRQIFNGLTRINEENGELEPDLSHHWQAITPLHWRFYLRPAIHFHHGRELEMSDVISSLTRLIPQPLFSHIAEVRSPTPYVIDVYLHSPDHWLPWLLGSVHAMILPQEWETQPDFHRQPIGTGPYSVIRNHHSQLKIQAFDNYFGFRALIDEVNIWVLPELSEELVYSGVQLQADDTGKNELESRLEEGCYFLLFDQRSPQACTPEIRRWLCELITPIALLSHAAPFYQRYWSPAYGMLPRWHHNRLTTQEPKPEGLNELTLTFYSEHSEFDAISQTLTQLLAAQGVTLKIQVLDYTRWYQGDAQSDIWLGSANFYLPLEFSLFATLYEMPLLQHCLSEELHQDIESWRNNTLLMADWSQRLVSQHQFHPLFHHWLELYGQHSMRGVRMNTLGWFDFKSAWFTPPEA.

The region spanning 1–113 (MSTSRLQQQF…RQMLLSQLGR (113 aa)) is the HTH marR-type domain. Residues 26 to 49 (LQALAEVLNCSRRHVRSLLGKMQH) constitute a DNA-binding region (H-T-H motif). Positions 163 to 494 (ELEPDLSHHW…EELHQDIESW (332 aa)) are solute-binding.

Functionally, activates the small RNA gene sgrS under glucose-phosphate stress conditions as well as yfdZ. Represses its own transcription under both stress and non-stress conditions. Might act as a sensor of the intracellular accumulation of phosphoglucose by binding these molecules in its C-terminal solute-binding domain. The chain is HTH-type transcriptional regulator SgrR from Yersinia pestis bv. Antiqua (strain Antiqua).